Consider the following 472-residue polypeptide: 3-isopropylmalate dehydratase large subunit (472 aa).

The [4Fe-4S] cluster site is built by Cys-352, Cys-413, and Cys-416.

Belongs to the aconitase/IPM isomerase family. LeuC type 1 subfamily. Heterodimer of LeuC and LeuD. [4Fe-4S] cluster is required as a cofactor.

It carries out the reaction (2R,3S)-3-isopropylmalate = (2S)-2-isopropylmalate. The protein operates within amino-acid biosynthesis; L-leucine biosynthesis; L-leucine from 3-methyl-2-oxobutanoate: step 2/4. In terms of biological role, catalyzes the isomerization between 2-isopropylmalate and 3-isopropylmalate, via the formation of 2-isopropylmaleate. This chain is 3-isopropylmalate dehydratase large subunit, found in Laribacter hongkongensis (strain HLHK9).